We begin with the raw amino-acid sequence, 127 residues long: Small ribosomal subunit protein eS8 (127 aa).

Belongs to the eukaryotic ribosomal protein eS8 family. As to quaternary structure, part of the 30S ribosomal subunit.

The chain is Small ribosomal subunit protein eS8 (rps8e) from Pyrococcus abyssi (strain GE5 / Orsay).